The following is a 350-amino-acid chain: Histidinol-phosphate aminotransferase 1 (350 aa).

Lys211 carries the N6-(pyridoxal phosphate)lysine modification.

This sequence belongs to the class-II pyridoxal-phosphate-dependent aminotransferase family. Histidinol-phosphate aminotransferase subfamily. Homodimer. Pyridoxal 5'-phosphate is required as a cofactor.

The enzyme catalyses L-histidinol phosphate + 2-oxoglutarate = 3-(imidazol-4-yl)-2-oxopropyl phosphate + L-glutamate. It functions in the pathway amino-acid biosynthesis; L-histidine biosynthesis; L-histidine from 5-phospho-alpha-D-ribose 1-diphosphate: step 7/9. The chain is Histidinol-phosphate aminotransferase 1 from Trichormus variabilis (strain ATCC 29413 / PCC 7937) (Anabaena variabilis).